Consider the following 156-residue polypeptide: Small ribosomal subunit protein uS7 (156 aa).

The protein belongs to the universal ribosomal protein uS7 family. In terms of assembly, part of the 30S ribosomal subunit. Contacts proteins S9 and S11.

In terms of biological role, one of the primary rRNA binding proteins, it binds directly to 16S rRNA where it nucleates assembly of the head domain of the 30S subunit. Is located at the subunit interface close to the decoding center, probably blocks exit of the E-site tRNA. The protein is Small ribosomal subunit protein uS7 of Brucella anthropi (strain ATCC 49188 / DSM 6882 / CCUG 24695 / JCM 21032 / LMG 3331 / NBRC 15819 / NCTC 12168 / Alc 37) (Ochrobactrum anthropi).